The primary structure comprises 565 residues: NAD-dependent malic enzyme (565 aa).

Residue Tyr104 is the Proton donor of the active site. Arg157 is an NAD(+) binding site. Residue Lys175 is the Proton acceptor of the active site. A divalent metal cation contacts are provided by Glu246, Asp247, and Asp270. NAD(+)-binding residues include Asp270 and Asn418.

It belongs to the malic enzymes family. In terms of assembly, homotetramer. Mg(2+) is required as a cofactor. Requires Mn(2+) as cofactor.

It carries out the reaction (S)-malate + NAD(+) = pyruvate + CO2 + NADH. The enzyme catalyses oxaloacetate + H(+) = pyruvate + CO2. The polypeptide is NAD-dependent malic enzyme (Photorhabdus laumondii subsp. laumondii (strain DSM 15139 / CIP 105565 / TT01) (Photorhabdus luminescens subsp. laumondii)).